The primary structure comprises 213 residues: Glutathione S-transferase DHAR2 (213 aa).

S-glutathionyl cysteine is present on C6. Positions 8 and 19 each coordinate glutathione. 2 residues coordinate L-ascorbate: K8 and D19. One can recognise a GST N-terminal domain in the interval A10–K83. C20 is modified (S-glutathionyl cysteine). The active-site Nucleophile is the C20. A Glutathione-binding motif is present at residues C20 to R25. Positions 47, 60, 73, 160, and 207 each coordinate glutathione. Residues Y84 to A213 enclose the GST C-terminal domain. K210 is an L-ascorbate binding site.

This sequence belongs to the GST superfamily. DHAR family. In terms of assembly, monomer. Post-translationally, spontaneous S-glutathionylation in the presence of oxidized glutathione (GSSG).

Its subcellular location is the cytoplasm. It localises to the cytosol. The catalysed reaction is RX + glutathione = an S-substituted glutathione + a halide anion + H(+). The enzyme catalyses L-dehydroascorbate + 2 glutathione = glutathione disulfide + L-ascorbate. Displays a dual function. As a soluble protein, exhibits glutathione-dependent thiol transferase and dehydroascorbate (DHA) reductase activities. Exhibits glutathione-dependent thiol transferase and dehydroascorbate (DHA) reductase activities. Key component of the ascorbate recycling system. Involved in the redox homeostasis, especially in scavenging of ROS under oxidative stresses. Plays a role in ozone tolerance. In Arabidopsis thaliana (Mouse-ear cress), this protein is Glutathione S-transferase DHAR2 (DHAR2).